The sequence spans 171 residues: UPF0312 protein SAB2563 (171 aa).

The protein belongs to the UPF0312 family.

The chain is UPF0312 protein SAB2563 from Staphylococcus aureus (strain bovine RF122 / ET3-1).